Here is a 370-residue protein sequence, read N- to C-terminus: Chorismate synthase (370 aa).

Position 47 (Arg47) interacts with NADP(+). Residues 124 to 126 (RSS), Gly286, 301 to 305 (KPTAT), and Arg327 each bind FMN.

Belongs to the chorismate synthase family. As to quaternary structure, homotetramer. Requires FMNH2 as cofactor.

It carries out the reaction 5-O-(1-carboxyvinyl)-3-phosphoshikimate = chorismate + phosphate. The protein operates within metabolic intermediate biosynthesis; chorismate biosynthesis; chorismate from D-erythrose 4-phosphate and phosphoenolpyruvate: step 7/7. Its function is as follows. Catalyzes the anti-1,4-elimination of the C-3 phosphate and the C-6 proR hydrogen from 5-enolpyruvylshikimate-3-phosphate (EPSP) to yield chorismate, which is the branch point compound that serves as the starting substrate for the three terminal pathways of aromatic amino acid biosynthesis. This reaction introduces a second double bond into the aromatic ring system. In Trichodesmium erythraeum (strain IMS101), this protein is Chorismate synthase.